We begin with the raw amino-acid sequence, 977 residues long: Serine/threonine-protein kinase/endoribonuclease IRE1 (977 aa).

The N-terminal stretch at 1–18 is a signal peptide; that stretch reads MPARRLLLLLTLLLPGLG. The Lumenal segment spans residues 19–443; it reads IFGSTSTVTL…EAPVDSMLKD (425 aa). A glycan (N-linked (GlcNAc...) asparagine) is linked at N176. A compositionally biased stretch (polar residues) spans 410 to 419; sequence TSENAPTTVS. Positions 410 to 434 are disordered; sequence TSENAPTTVSRDVEEKPAHAPARPE. A helical transmembrane segment spans residues 444–464; sequence MATIILSTFLLIGWVAFIITY. Residues 465–977 are Cytoplasmic-facing; it reads PLSMHQQQQL…PQPPVTPDAL (513 aa). The segment at 491 to 559 is disordered; it reads QQQQQLPFHP…PSLEQDDGDE (69 aa). The segment covering 513-552 has biased composition (low complexity); that stretch reads TSGPYSESSGTSSPSTSPRASNHSLCSGSSASKAGSSPSL. The Protein kinase domain occupies 571 to 832; sequence FCPKDVLGHG…AKHVLKHPFF (262 aa). Residues 577–585, K599, and 643–645 each bind ATP; these read LGHGAEGTI and ELC. Catalysis depends on D688, which acts as the Proton acceptor. Residues 690 to 693 and D711 each bind ATP; that span reads KPHN. Phosphoserine occurs at positions 724 and 729. The KEN domain maps to 835-963; sequence LEKQLQFFQD…ERLFQPYYFH (129 aa). Positions 906–907 are interacts with hydroxy-aryl-aldehyde inhibitors; sequence NK. T973 carries the post-translational modification Phosphothreonine.

The protein belongs to the protein kinase superfamily. Ser/Thr protein kinase family. As to quaternary structure, monomer. Homodimer; disulfide-linked; homodimerization takes place in response to endoplasmic reticulum stress and promotes activation of the kinase and endoribonuclease activities. Dimer formation is driven by hydrophobic interactions within the N-terminal luminal domains and stabilized by disulfide bridges. Interacts (via the luminal region) with DNAJB9/ERdj4; interaction takes place in unstressed cells and promotes recruitment of HSPA5/BiP. Interacts (via the luminal region) with HSPA5/BiP; HSPA5/BiP is a negative regulator of the unfolded protein response (UPR) that prevents homodimerization of ERN1/IRE1 and subsequent activation of the protein. Interaction with HSPA5 also competitively inhibits ERN1 interaction with MANF. Interacts with PDIA6, a negative regulator of the UPR; the interaction is direct and disrupts homodimerization. Interacts with DAB2IP (via PH domain); the interaction occurs in a endoplasmic reticulum stress-induced dependent manner and is required for subsequent recruitment of TRAF2 to ERN1/IRE1. Interacts with TAOK3 and TRAF2. Interacts with RNF13. Interacts with LACC1. Interacts (when unphosphorylated) with DDRGK1; interaction is dependent on UFM1 and takes place in response to endoplasmic reticulum stress, regulating ERN1/IRE1-alpha stability. Interacts (via N-terminus) with P4HB/PDIA1; the interaction is enhanced by phosphorylation of P4HB by FAM20C in response to endoplasmic reticulum stress and results in attenuation of ERN1 activity. Interacts with TMBIM6; this interaction inhibits ERN1 activity. Interacts (via luminal domain) with MANF (via C-terminus); the interaction is decreased in the presence of increasing concentrations of Ca(2+). Requires Mg(2+) as cofactor. Autophosphorylated following homodimerization. Autophosphorylation promotes activation of the endoribonuclease domain. In response to ER stress, phosphorylated at Ser-724, Ser-729 and possibly Ser-726; phosphorylation promotes oligomerization and endoribonuclease activity. Dephosphorylated at Ser-724, Ser-729 and possibly Ser-726 by RPAP2 to abort failed ER-stress adaptation and trigger apoptosis. Phosphorylated at Ser-724; in response to the ER stressor tunicamycin. Post-translationally, ADP-ribosylated by PARP16 upon ER stress, which increases both kinase and endonuclease activities. As to expression, ubiquitously expressed. High levels observed in pancreatic tissue.

The protein localises to the endoplasmic reticulum membrane. The enzyme catalyses L-seryl-[protein] + ATP = O-phospho-L-seryl-[protein] + ADP + H(+). It catalyses the reaction L-threonyl-[protein] + ATP = O-phospho-L-threonyl-[protein] + ADP + H(+). Its activity is regulated as follows. The kinase domain is activated by trans-autophosphorylation following homodimerization. Kinase activity is required for activation of the endoribonuclease domain. Endoribonuclease activity is specifically inhibited by hydroxy-aryl-aldehydes (HAA). Its function is as follows. Serine/threonine-protein kinase and endoribonuclease that acts as a key sensor for the endoplasmic reticulum unfolded protein response (UPR). In unstressed cells, the endoplasmic reticulum luminal domain is maintained in its inactive monomeric state by binding to the endoplasmic reticulum chaperone HSPA5/BiP. Accumulation of misfolded proteins in the endoplasmic reticulum causes release of HSPA5/BiP, allowing the luminal domain to homodimerize, promoting autophosphorylation of the kinase domain and subsequent activation of the endoribonuclease activity. The endoribonuclease activity is specific for XBP1 mRNA and excises 26 nucleotides from XBP1 mRNA. The resulting spliced transcript of XBP1 encodes a transcriptional activator protein that up-regulates expression of UPR target genes. Acts as an upstream signal for ER stress-induced GORASP2-mediated unconventional (ER/Golgi-independent) trafficking of CFTR to cell membrane by modulating the expression and localization of SEC16A. This is Serine/threonine-protein kinase/endoribonuclease IRE1 from Homo sapiens (Human).